Here is a 335-residue protein sequence, read N- to C-terminus: Methionine import ATP-binding protein MetN (335 aa).

The ABC transporter domain maps to 2–241 (IQFQRLHKSY…PKHATTRRFV (240 aa)). ATP is bound at residue 38–45 (GHSGAGKS).

This sequence belongs to the ABC transporter superfamily. Methionine importer (TC 3.A.1.24) family. In terms of assembly, the complex is composed of two ATP-binding proteins (MetN), two transmembrane proteins (MetI) and a solute-binding protein (MetQ).

Its subcellular location is the cell inner membrane. It carries out the reaction L-methionine(out) + ATP + H2O = L-methionine(in) + ADP + phosphate + H(+). The catalysed reaction is D-methionine(out) + ATP + H2O = D-methionine(in) + ADP + phosphate + H(+). In terms of biological role, part of the ABC transporter complex MetNIQ involved in methionine import. Responsible for energy coupling to the transport system. In Xanthomonas euvesicatoria pv. vesicatoria (strain 85-10) (Xanthomonas campestris pv. vesicatoria), this protein is Methionine import ATP-binding protein MetN.